The following is a 392-amino-acid chain: Protein trapped in endoderm-1 (392 aa).

At Met1–Ala39 the chain is on the extracellular side. Residues Ile40–Leu60 traverse the membrane as a helical segment. Over Leu61–Ala73 the chain is Cytoplasmic. A helical membrane pass occupies residues Phe74–Ala94. Over Val95–Lys110 the chain is Extracellular. A helical membrane pass occupies residues Ile111–Thr131. Residues Leu132–Gln156 are Cytoplasmic-facing. Residues Leu157 to Gly177 form a helical membrane-spanning segment. Residues Glu178–Leu202 lie on the Extracellular side of the membrane. A helical membrane pass occupies residues Phe203–Ile223. Over Thr224 to Arg268 the chain is Cytoplasmic. The chain crosses the membrane as a helical span at residues Leu269–Leu289. The Extracellular segment spans residues Ala290 to Pro302. N-linked (GlcNAc...) asparagine glycosylation is present at Asn298. The helical transmembrane segment at Trp303–Tyr323 threads the bilayer. Residues Ala324–Val392 lie on the Cytoplasmic side of the membrane. 3 positions are modified to phosphoserine: Ser359, Ser362, and Ser366. Thr372 carries the phosphothreonine modification.

Belongs to the G-protein coupled receptor 1 family. As to expression, in embryos, expression is seen at highest levels in the cuprophilic cells and at lower levels in the amnioserosa, developing CNS, cardiac mesoderm primordium and midline glia.

The protein localises to the cell membrane. Its function is as follows. Essential for the first active step of germ cell migration: transepithelial migration of germ cells through the posterior midgut (PMG) epithelium. The chain is Protein trapped in endoderm-1 (Tre1) from Drosophila melanogaster (Fruit fly).